A 404-amino-acid chain; its full sequence is Dihydrolipoyllysine-residue acetyltransferase component of pyruvate dehydrogenase complex (404 aa).

In terms of domain architecture, Lipoyl-binding spans 2–78; the sequence is PIKILMPALS…PVNSLIAVLS (77 aa). The residue at position 43 (K43) is an N6-lipoyllysine. The 38-residue stretch at 128–165 folds into the Peripheral subunit-binding (PSBD) domain; it reads FASPLAKRLAKIRNIRLESVQGSGPHGRIVKQDILSYS. Residue H377 is part of the active site.

It belongs to the 2-oxoacid dehydrogenase family. In terms of assembly, forms a 24-polypeptide structural core with octahedral symmetry. (R)-lipoate serves as cofactor.

It catalyses the reaction N(6)-[(R)-dihydrolipoyl]-L-lysyl-[protein] + acetyl-CoA = N(6)-[(R)-S(8)-acetyldihydrolipoyl]-L-lysyl-[protein] + CoA. In terms of biological role, the pyruvate dehydrogenase complex catalyzes the overall conversion of pyruvate to acetyl-CoA and CO(2). It contains multiple copies of three enzymatic components: pyruvate dehydrogenase (E1), dihydrolipoamide acetyltransferase (E2) and lipoamide dehydrogenase (E3). The polypeptide is Dihydrolipoyllysine-residue acetyltransferase component of pyruvate dehydrogenase complex (pdhC) (Rickettsia typhi (strain ATCC VR-144 / Wilmington)).